The sequence spans 126 residues: Probable S-adenosyl-L-methionine-binding protein MJ1583 (126 aa).

Positions 4 to 126 constitute a TsaA-like domain; sequence LKPIGVVEQN…FSEKLDCPKI (123 aa). Residues 45–46, R75, and 106–109 contribute to the S-adenosyl-L-methionine site; these read HK and YNET.

The protein belongs to the tRNA methyltransferase O family.

The protein is Probable S-adenosyl-L-methionine-binding protein MJ1583 of Methanocaldococcus jannaschii (strain ATCC 43067 / DSM 2661 / JAL-1 / JCM 10045 / NBRC 100440) (Methanococcus jannaschii).